Consider the following 502-residue polypeptide: ATP synthase subunit alpha (502 aa).

An ATP-binding site is contributed by 169–176 (GDRQTGKT).

This sequence belongs to the ATPase alpha/beta chains family. In terms of assembly, F-type ATPases have 2 components, CF(1) - the catalytic core - and CF(0) - the membrane proton channel. CF(1) has five subunits: alpha(3), beta(3), gamma(1), delta(1), epsilon(1). CF(0) has three main subunits: a(1), b(2) and c(9-12). The alpha and beta chains form an alternating ring which encloses part of the gamma chain. CF(1) is attached to CF(0) by a central stalk formed by the gamma and epsilon chains, while a peripheral stalk is formed by the delta and b chains.

It localises to the cell membrane. It carries out the reaction ATP + H2O + 4 H(+)(in) = ADP + phosphate + 5 H(+)(out). Produces ATP from ADP in the presence of a proton gradient across the membrane. The alpha chain is a regulatory subunit. In Exiguobacterium sibiricum (strain DSM 17290 / CCUG 55495 / CIP 109462 / JCM 13490 / 255-15), this protein is ATP synthase subunit alpha.